Here is a 762-residue protein sequence, read N- to C-terminus: Polyadenylate-binding protein, cytoplasmic and nuclear (762 aa).

A disordered region spans residues 39-58; sequence TGEEIDTAGPTPSSAAPHPQ. Over residues 48-58 the composition is skewed to low complexity; the sequence is PTPSSAAPHPQ. 4 consecutive RRM domains span residues 61–139, 149–226, 242–320, and 346–470; these read ASLY…WSQR, GNVF…HHIP, TNIY…RAQK, and VNLY…LAQR. Disordered regions lie at residues 376-429, 596-663, and 740-762; these read KVMR…KSKL, SALA…AGAP, and VRQQGDGEGAQAPSKEEKTEEKA. Positions 389–425 are enriched in basic and acidic residues; sequence GESKEGEESEKNKENKPEEKEGDDSKPEEKEGEDSKS. Residues 600 to 612 are compositionally biased toward gly residues; sequence GGRGGPAGRGPMQ. The span at 645 to 663 shows a compositional bias: low complexity; the sequence is AAGRAPAGAPAGARGAGAP. The region spanning 664 to 741 is the PABC domain; the sequence is EGLQGQLAAV…ALAVYDDYVR (78 aa). Positions 753-762 are enriched in basic and acidic residues; that stretch reads SKEEKTEEKA.

Belongs to the polyadenylate-binding protein type-1 family.

It is found in the cytoplasm. The protein localises to the nucleus. Its function is as follows. Binds the poly(A) tail of mRNA. Appears to be an important mediator of the multiple roles of the poly(A) tail in mRNA biogenesis, stability and translation. In the nucleus, involved in both mRNA cleavage and polyadenylation. Is also required for efficient mRNA export to the cytoplasm. Acts in concert with a poly(A)-specific nuclease (PAN) to affect poly(A) tail shortening, which may occur concomitantly with either nucleocytoplasmic mRNA transport or translational initiation. In the cytoplasm, stimulates translation initiation and regulates mRNA decay through translation termination-coupled poly(A) shortening, probably mediated by PAN. In Pyricularia oryzae (strain 70-15 / ATCC MYA-4617 / FGSC 8958) (Rice blast fungus), this protein is Polyadenylate-binding protein, cytoplasmic and nuclear (PAB1).